A 456-amino-acid chain; its full sequence is Potassium voltage-gated channel subfamily A member 7 (456 aa).

A helical transmembrane segment spans residues 144–164 (VLAVVSVLVILVSIVVFCLET). The N-linked (GlcNAc...) asparagine glycan is linked to Asn-191. The helical transmembrane segment at 209–229 (FFVVETLCICWFSFELLVRLL) threads the bilayer. Cys-231 is lipidated: S-palmitoyl cysteine. The chain crosses the membrane as a helical span at residues 241-261 (VMNLIDFVAILPYFVALGTEL). Residues 276 to 295 (ILRVIRLVRVFRIFKLSRHS) form a helical; Voltage-sensor membrane-spanning segment. A helical membrane pass occupies residues 312–332 (LGLLIFFLFIGVVLFSSAVYF). The Selectivity filter signature appears at 358 to 363 (TVGYGD). A helical transmembrane segment spans residues 373–393 (IVGSLCAIAGVLTISLPVPVI).

This sequence belongs to the potassium channel family. A (Shaker) (TC 1.A.1.2) subfamily. Kv1.7/KCNA7 sub-subfamily. In terms of assembly, heterotetramer of potassium channel proteins. Highly expressed in skeletal muscle, heart and kidney.

Its subcellular location is the membrane. It catalyses the reaction K(+)(in) = K(+)(out). Its function is as follows. Mediates the voltage-dependent potassium ion permeability of excitable membranes. Assuming opened or closed conformations in response to the voltage difference across the membrane, the protein forms a potassium-selective channel through which potassium ions may pass in accordance with their electrochemical gradient. The chain is Potassium voltage-gated channel subfamily A member 7 (KCNA7) from Homo sapiens (Human).